The following is a 137-amino-acid chain: Nucleoside diphosphate kinase (137 aa).

K9, F57, R85, T91, R102, and N112 together coordinate ATP. Residue H115 is the Pros-phosphohistidine intermediate of the active site.

This sequence belongs to the NDK family. In terms of assembly, homotetramer. The cofactor is Mg(2+).

Its subcellular location is the cytoplasm. The catalysed reaction is a 2'-deoxyribonucleoside 5'-diphosphate + ATP = a 2'-deoxyribonucleoside 5'-triphosphate + ADP. It carries out the reaction a ribonucleoside 5'-diphosphate + ATP = a ribonucleoside 5'-triphosphate + ADP. In terms of biological role, major role in the synthesis of nucleoside triphosphates other than ATP. The ATP gamma phosphate is transferred to the NDP beta phosphate via a ping-pong mechanism, using a phosphorylated active-site intermediate. This Campylobacter lari (strain RM2100 / D67 / ATCC BAA-1060) protein is Nucleoside diphosphate kinase.